The primary structure comprises 96 residues: Prokineticin Bv8-like peptide 2 (96 aa).

The N-terminal stretch at 1–19 is a signal peptide; sequence MKCFAQIVVLLLVIAFSHG. 5 cysteine pairs are disulfide-bonded: Cys-26–Cys-38, Cys-32–Cys-50, Cys-37–Cys-78, Cys-60–Cys-86, and Cys-80–Cys-95.

The protein belongs to the AVIT (prokineticin) family. Expressed by the skin glands.

The protein resides in the secreted. Functionally, potent agonist for both PKR1/PROKR1 and PKR2/PROKR2, and inducer of a potent and long-lasting hyperalgesia. Also potentiates capsaicin-induced TRPV1 current when tested on DRG neurons. At subnanomolar concentrations, this protein both induces potent chemotaxis of macrophages and stimulates LPS-induced production of the pro-inflammatory cytokines IL-1 and IL-12. In vivo, potently stimulates the contraction of the guinea-pig gastrointestinal (GI) smooth muscle (nanomolar concentration) and rabbit aortic rings. This chain is Prokineticin Bv8-like peptide 2, found in Bombina maxima (Giant fire-bellied toad).